Here is a 375-residue protein sequence, read N- to C-terminus: E3 ubiquitin-protein ligase FANCL (375 aa).

A2 carries the post-translational modification N-acetylalanine. The segment at 104 to 294 (LPPPPQFYSS…KDVLEIDFPA (191 aa)) is UBC-RWD region (URD). Zn(2+) contacts are provided by C307, C310, C324, C329, H334, C337, C359, and C362. Residues 307–363 (CGICYAYQLDGTIPDQVCDNSQCGQPFHQICLYEWLRGLLTSRQSFNIIFGECPYCS) form an RING-type; degenerate zinc finger.

In terms of assembly, interacts with GGN. Belongs to the multisubunit FA complex composed of FANCA, FANCB, FANCC, FANCE, FANCF, FANCG, FANCL/PHF9 and FANCM. The complex is not found in FA patients. In complex with FANCF, FANCA and FANCG, but not with FANCC, nor FANCE, interacts with HES1; this interaction may be essential for the stability and nuclear localization of FA core complex proteins. Interacts with FANCI. Directly interacts (via the RING-type zinc finger) with UBE2T and UBE2W. In terms of processing, the RING-type zinc finger domain is monoubiquitinated in the presence of UBE2T and UBE2W.

It localises to the cytoplasm. The protein localises to the nucleus. The enzyme catalyses S-ubiquitinyl-[E2 ubiquitin-conjugating enzyme]-L-cysteine + [acceptor protein]-L-lysine = [E2 ubiquitin-conjugating enzyme]-L-cysteine + N(6)-ubiquitinyl-[acceptor protein]-L-lysine.. The protein operates within protein modification; protein ubiquitination. Ubiquitin ligase protein that mediates monoubiquitination of FANCD2 in the presence of UBE2T, a key step in the DNA damage pathway. Also mediates monoubiquitination of FANCI. May stimulate the ubiquitin release from UBE2W. May be required for proper primordial germ cell proliferation in the embryonic stage, whereas it is probably not needed for spermatogonial proliferation after birth. The protein is E3 ubiquitin-protein ligase FANCL (FANCL) of Homo sapiens (Human).